Consider the following 561-residue polypeptide: Chaperonin GroEL 1 (561 aa).

Residues 29-32 (TMGP), 86-90 (DGTTT), Gly-413, and Asp-495 each bind ATP.

Belongs to the chaperonin (HSP60) family. Forms a cylinder of 14 subunits composed of two heptameric rings stacked back-to-back. Interacts with the co-chaperonin GroES.

Its subcellular location is the cytoplasm. It catalyses the reaction ATP + H2O + a folded polypeptide = ADP + phosphate + an unfolded polypeptide.. In terms of biological role, together with its co-chaperonin GroES, plays an essential role in assisting protein folding. The GroEL-GroES system forms a nano-cage that allows encapsulation of the non-native substrate proteins and provides a physical environment optimized to promote and accelerate protein folding. The protein is Chaperonin GroEL 1 of Trichodesmium erythraeum (strain IMS101).